Here is a 323-residue protein sequence, read N- to C-terminus: MAVSLPTKYPLRPITNIPKSHRPSLLRVRVTCSVTTTKPQPNREKLLVEQRTVNLPLSNDQSLQSTKPRPNREKLVVEQRLASPPLSNDPTLKSTWTHRLWVAAGCTTLFVSLAKSVIGGFDSHLCLEPALAGYAGYILADLGSGVYHWAIDNYGDESTPVVGTQIEAFQGHHKWPWTITRRQFANNLHALAQVITFTVLPLDLAFNDPVFHGFVCTFAFCILFSQQFHAWAHGTKSKLPPLVVALQDMGLLVSRRQHAEHHRAPYNNNYCIVSGAWNNVLDESKVFEALEMVFYFQLGVRPRSWSEPNSDWIEETEISNNQA.

The transit peptide at 1 to 77 directs the protein to the chloroplast; that stretch reads MAVSLPTKYP…PRPNREKLVV (77 aa). Transmembrane regions (helical) follow at residues 101–121 and 131–151; these read WVAAGCTTLFVSLAKSVIGGF and LAGYAGYILADLGSGVYHWAI. The short motif at 170–173 is the Histidine box-1 element; it reads QGHH. A helical membrane pass occupies residues 204 to 224; that stretch reads LAFNDPVFHGFVCTFAFCILF. Positions 229-233 match the Histidine box-2 motif; sequence HAWAH. Residues 258-262 carry the Histidine box-3 motif; it reads HAEHH.

It belongs to the fatty acid desaturase CarF family. Fe(2+) is required as a cofactor.

It is found in the plastid. The protein resides in the chloroplast membrane. It carries out the reaction a 1-acyl-2-hexadecanoyl-glycerolipid + 2 reduced [2Fe-2S]-[ferredoxin] + O2 + 2 H(+) = a 1-acyl-2-[(3E)-hexadec-3-enoyl]-glycerolipid + 2 oxidized [2Fe-2S]-[ferredoxin] + 2 H2O. The protein operates within lipid metabolism; fatty acid metabolism. Functionally, fatty acid desaturase involved in the production of chloroplast-specific phosphatidylglycerol molecular species containing 16:1(3E). Catalyzes the formation of a trans double bond introduced close to the carboxyl group of palmitic acid, which is specifically esterified to the sn-2 glyceryl carbon of phosphatidylglycerol. This chain is Fatty acid desaturase 4, chloroplastic, found in Arabidopsis thaliana (Mouse-ear cress).